Here is a 185-residue protein sequence, read N- to C-terminus: Ribosome-recycling factor (185 aa).

The segment at 132–152 is disordered; it reads RRDANEQLKKMEKDSELTEDD.

This sequence belongs to the RRF family.

The protein resides in the cytoplasm. Responsible for the release of ribosomes from messenger RNA at the termination of protein biosynthesis. May increase the efficiency of translation by recycling ribosomes from one round of translation to another. The polypeptide is Ribosome-recycling factor (Alkaliphilus metalliredigens (strain QYMF)).